We begin with the raw amino-acid sequence, 735 residues long: DNA replication licensing factor mcm5-A (735 aa).

Residues 332–538 (IYETVAKSIA…RDMTLAKHVM (207 aa)) enclose the MCM domain. ADP is bound at residue Arg-372. Positions 513-516 (SRFD) match the Arginine finger motif.

This sequence belongs to the MCM family. Component of the mcm2-7 complex (RLF-M). The complex forms a toroidal hexameric ring with the proposed subunit order mcm2-mcm6-mcm4-mcm7-mcm3-mcm5. The heterodimer of mmcm3/mcm5 interacts with mcm4, mmcm6, mcm7 and weakly with mcm2. Component of the CMG helicase complex, composed of the mcm2-7 complex, the GINS complex and cdc45.

It is found in the nucleus. The protein localises to the chromosome. It carries out the reaction ATP + H2O = ADP + phosphate + H(+). Its function is as follows. Acts as a component of the MCM2-7 complex (MCM complex) which is the replicative helicase essential for 'once per cell cycle' DNA replication initiation and elongation in eukaryotic cells. Core component of CDC45-MCM-GINS (CMG) helicase, the molecular machine that unwinds template DNA during replication, and around which the replisome is built. The active ATPase sites in the MCM2-7 ring are formed through the interaction surfaces of two neighboring subunits such that a critical structure of a conserved arginine finger motif is provided in trans relative to the ATP-binding site of the Walker A box of the adjacent subunit. The six ATPase active sites, however, are likely to contribute differentially to the complex helicase activity. This is DNA replication licensing factor mcm5-A (mcm5-a) from Xenopus laevis (African clawed frog).